A 381-amino-acid polypeptide reads, in one-letter code: Cytochrome b (381 aa).

The next 4 membrane-spanning stretches (helical) occupy residues 34-54 (FGSLLGLCLIIQILTGLFLAM), 78-99 (WLIRNIHANGASLFFICVYLHI), 114-134 (WNIGVILLFLLMATAFVGYVL), and 179-199 (FFAFHFLLPFLIVGLTLIHLL). The heme b site is built by histidine 84 and histidine 98. Positions 183 and 197 each coordinate heme b. An a ubiquinone-binding site is contributed by histidine 202. 4 helical membrane-spanning segments follow: residues 227-247 (YKDLLGFFLMIILLALLALFL), 289-309 (LGGVLALLFSIFILMLIPMLH), 321-341 (MTQFLFWTLVANAIILTWIGG), and 348-368 (FILVGQIASVTYFSLFLIIIP).

This sequence belongs to the cytochrome b family. As to quaternary structure, the cytochrome bc1 complex contains 3 respiratory subunits (MT-CYB, CYC1 and UQCRFS1), 2 core proteins (UQCRC1 and UQCRC2) and probably 6 low-molecular weight proteins. Requires heme b as cofactor.

The protein resides in the mitochondrion inner membrane. Component of the ubiquinol-cytochrome c reductase complex (complex III or cytochrome b-c1 complex) that is part of the mitochondrial respiratory chain. The b-c1 complex mediates electron transfer from ubiquinol to cytochrome c. Contributes to the generation of a proton gradient across the mitochondrial membrane that is then used for ATP synthesis. In Squalus acanthias (Spiny dogfish), this protein is Cytochrome b (mt-cyb).